A 378-amino-acid chain; its full sequence is Carbazole 1,9a-dioxygenase, terminal oxygenase component CarAa (378 aa).

Residues 29–135 form the Rieske domain; the sequence is WYPVRLASEI…VEEAKGLIFV (107 aa). Residues Cys-69, His-71, Cys-90, and His-93 each contribute to the [2Fe-2S] cluster site.

As to quaternary structure, homotrimer. Carbazole 1,9a-dioxygenase complex consists of a terminal oxygenase component CarAa, a ferredoxin reductase component fdr and a ferredoxin component CarAc. It depends on [2Fe-2S] cluster as a cofactor.

The enzyme catalyses 9H-carbazole + NADH + O2 + H(+) = 2'-aminobiphenyl-2,3-diol + NAD(+). It catalyses the reaction 9H-carbazole + NADPH + O2 + H(+) = 2'-aminobiphenyl-2,3-diol + NADP(+). Part of the multicomponent carbazole 1,9a-dioxygenase (CARDO), that converts carbazole (CAR) into 2-aminobiphenyl-2,3-diol. Catalyzes the dioxygenation at the angular (C-9a) and adjacent (C-1) positions of carbazole to yield a highly unstable cis-hydrodiol intermediate which is spontaneously converted to 2-aminobiphenyl-2,3-diol. This Sphingomonas sp protein is Carbazole 1,9a-dioxygenase, terminal oxygenase component CarAa (carAa).